The sequence spans 248 residues: Serine/arginine-rich splicing factor 1 (248 aa).

Position 2 is an N-acetylserine (serine 2). Phosphoserine is present on serine 2. Residues 16-91 (CRIYVGNLPP…YRLRVEFPRS (76 aa)) form the RRM 1 domain. Lysine 30 is covalently cross-linked (Glycyl lysine isopeptide (Lys-Gly) (interchain with G-Cter in SUMO2)). Residue lysine 38 is modified to N6-acetyllysine; alternate. Lysine 38 participates in a covalent cross-link: Glycyl lysine isopeptide (Lys-Gly) (interchain with G-Cter in SUMO2); alternate. A disordered region spans residues 88–134 (FPRSGRGTGRGGGGGGGGGAPRGRYGPPSRRSENRVVVSGLPPSGSW). Asymmetric dimethylarginine; alternate occurs at positions 93, 97, and 109. Residues arginine 93, arginine 97, and arginine 109 each carry the omega-N-methylarginine; alternate modification. The segment covering 93-108 (RGTGRGGGGGGGGGAP) has biased composition (gly residues). The residue at position 111 (arginine 111) is an Omega-N-methylarginine. The region spanning 121 to 195 (NRVVVSGLPP…ETAYIRVKVD (75 aa)) is the RRM 2 domain. Serine 133 is modified (phosphoserine). Residue lysine 179 is modified to N6-acetyllysine. Residues 191–248 (RVKVDGPRSPSYGRSRSRSRSRSRSRSRSNSRSRSYSPRRSRGSPRYSPRHSRSRSRT) are disordered. Residues 198–247 (RSPSYGRSRSRSRSRSRSRSRSNSRSRSYSPRRSRGSPRYSPRHSRSRSR) are interaction with SAFB1. Serine 199 and serine 201 each carry phosphoserine. At tyrosine 202 the chain carries Phosphotyrosine. Phosphoserine occurs at positions 205, 207, 209, 231, 234, and 238. A compositionally biased stretch (basic residues) spans 205 to 248 (SRSRSRSRSRSRSRSNSRSRSYSPRRSRGSPRYSPRHSRSRSRT).

The protein belongs to the splicing factor SR family. In terms of assembly, consists of two polypeptides of p32 and p33. Identified in the spliceosome C complex. Component of a ribonucleoprotein complex containing mRNAs and RNA-binding proteins including DDX5, HNRNPH2 and SRSF1 as well as splicing regulator ARVCF. In vitro, self-associates and binds SRSF2, SNRNP70 and U2AF1 but not U2AF2. Binds SREK1/SFRS12. Interacts with SAFB/SAFB1. Interacts with PSIP1/LEDGF. Interacts with RSRC1 (via Arg/Ser-rich domain). Interacts with ZRSR2/U2AF1-RS2. Interacts with CCDC55 (via C-terminus). Interacts with SRPK1 and a sliding docking interaction is essential for its sequential and processive phosphorylation by SRPK1. Interacts with NXF1. Interacts with CCNL1, CCNL2 and CDK11B. Interacts with RRP1B. Interacts (when phosphorylated in its RS domain) with TNPO3; promoting nuclear import. Interacts with ILDR1 (via C-terminus) and ILDR2. Phosphorylated by CLK1, CLK2, CLK3 and CLK4. Phosphorylated by SRPK1 at multiple serines in its RS domain via a directional (C-terminal to N-terminal) and a dual-track mechanism incorporating both processive phosphorylation (in which the kinase stays attached to the substrate after each round of phosphorylation) and distributive phosphorylation steps (in which the kinase and substrate dissociate after each phosphorylation event). The RS domain of SRSF1 binds to a docking groove in the large lobe of the kinase domain of SRPK1 and this induces certain structural changes in SRPK1 and/or RRM 2 domain of SRSF1, allowing RRM 2 to bind the kinase and initiate phosphorylation. The cycles continue for several phosphorylation steps in a processive manner (steps 1-8) until the last few phosphorylation steps (approximately steps 9-12). During that time, a mechanical stress induces the unfolding of the beta-4 motif in RRM 2, which then docks at the docking groove of SRPK1. This also signals RRM 2 to begin to dissociate, which facilitates SRSF1 dissociation after phosphorylation is completed. Post-translationally, asymmetrically dimethylated at arginines, probably by PRMT1, methylation promotes localization to nuclear speckles.

It is found in the cytoplasm. The protein resides in the nucleus speckle. Plays a role in preventing exon skipping, ensuring the accuracy of splicing and regulating alternative splicing. Interacts with other spliceosomal components, via the RS domains, to form a bridge between the 5'- and 3'-splice site binding components, U1 snRNP and U2AF. Can stimulate binding of U1 snRNP to a 5'-splice site-containing pre-mRNA. Binds to purine-rich RNA sequences, either the octamer, 5'-RGAAGAAC-3' (r=A or G) or the decamers, AGGACAGAGC/AGGACGAAGC. Binds preferentially to the 5'-CGAGGCG-3' motif in vitro. Three copies of the octamer constitute a powerful splicing enhancer in vitro, the ASF/SF2 splicing enhancer (ASE) which can specifically activate ASE-dependent splicing. May function as export adapter involved in mRNA nuclear export through the TAP/NXF1 pathway. This chain is Serine/arginine-rich splicing factor 1 (SRSF1), found in Bos taurus (Bovine).